The chain runs to 525 residues: Probable bifunctional tRNA threonylcarbamoyladenosine biosynthesis protein (525 aa).

Positions 1–322 (MPEKRVLGIE…FRSDQVEVTW (322 aa)) are kae1. Fe cation is bound by residues His-106, His-110, and Tyr-127. L-threonylcarbamoyladenylate contacts are provided by residues 127–131 (YASGA), Asp-159, Gly-172, Glu-176, and Asn-255. Asp-283 is a Fe cation binding site. One can recognise a Protein kinase domain in the interval 331 to 525 (APGQSETAER…HEIELRGRYL (195 aa)). Residues 338–346 (AERGAEASV) and Lys-355 each bind ATP. Asp-442 serves as the catalytic Proton acceptor; for kinase activity.

This sequence in the N-terminal section; belongs to the KAE1 / TsaD family. The protein in the C-terminal section; belongs to the protein kinase superfamily. Tyr protein kinase family. BUD32 subfamily. As to quaternary structure, component of the KEOPS complex that consists of Kae1, Bud32, Cgi121 and Pcc1; the whole complex dimerizes. It depends on Fe(2+) as a cofactor.

Its subcellular location is the cytoplasm. It catalyses the reaction L-seryl-[protein] + ATP = O-phospho-L-seryl-[protein] + ADP + H(+). The enzyme catalyses L-threonyl-[protein] + ATP = O-phospho-L-threonyl-[protein] + ADP + H(+). It carries out the reaction L-threonylcarbamoyladenylate + adenosine(37) in tRNA = N(6)-L-threonylcarbamoyladenosine(37) in tRNA + AMP + H(+). Its function is as follows. Required for the formation of a threonylcarbamoyl group on adenosine at position 37 (t(6)A37) in tRNAs that read codons beginning with adenine. Is a component of the KEOPS complex that is probably involved in the transfer of the threonylcarbamoyl moiety of threonylcarbamoyl-AMP (TC-AMP) to the N6 group of A37. The Kae1 domain likely plays a direct catalytic role in this reaction. The Bud32 domain probably displays kinase activity that regulates Kae1 function. The polypeptide is Probable bifunctional tRNA threonylcarbamoyladenosine biosynthesis protein (Methanocorpusculum labreanum (strain ATCC 43576 / DSM 4855 / Z)).